The primary structure comprises 210 residues: Large ribosomal subunit protein bL25 (210 aa).

Positions L179–G210 are disordered. A compositionally biased stretch (basic and acidic residues) spans E201–G210.

Belongs to the bacterial ribosomal protein bL25 family. CTC subfamily. Part of the 50S ribosomal subunit; part of the 5S rRNA/L5/L18/L25 subcomplex. Contacts the 5S rRNA. Binds to the 5S rRNA independently of L5 and L18.

Functionally, this is one of the proteins that binds to the 5S RNA in the ribosome where it forms part of the central protuberance. The protein is Large ribosomal subunit protein bL25 of Geobacillus thermodenitrificans (strain NG80-2).